The chain runs to 280 residues: uncharacterized protein (280 aa).

This is an uncharacterized protein from Acanthamoeba polyphaga mimivirus (APMV).